We begin with the raw amino-acid sequence, 273 residues long: Orotidine 5'-phosphate decarboxylase (273 aa).

Catalysis depends on Lys97, which acts as the Proton donor.

Belongs to the OMP decarboxylase family. Type 2 subfamily.

It catalyses the reaction orotidine 5'-phosphate + H(+) = UMP + CO2. The protein operates within pyrimidine metabolism; UMP biosynthesis via de novo pathway; UMP from orotate: step 2/2. In Cellvibrio japonicus (strain Ueda107) (Pseudomonas fluorescens subsp. cellulosa), this protein is Orotidine 5'-phosphate decarboxylase.